A 259-amino-acid chain; its full sequence is 3-deoxy-manno-octulosonate cytidylyltransferase (259 aa).

This sequence belongs to the KdsB family.

Its subcellular location is the cytoplasm. It carries out the reaction 3-deoxy-alpha-D-manno-oct-2-ulosonate + CTP = CMP-3-deoxy-beta-D-manno-octulosonate + diphosphate. It participates in nucleotide-sugar biosynthesis; CMP-3-deoxy-D-manno-octulosonate biosynthesis; CMP-3-deoxy-D-manno-octulosonate from 3-deoxy-D-manno-octulosonate and CTP: step 1/1. The protein operates within bacterial outer membrane biogenesis; lipopolysaccharide biosynthesis. In terms of biological role, activates KDO (a required 8-carbon sugar) for incorporation into bacterial lipopolysaccharide in Gram-negative bacteria. The polypeptide is 3-deoxy-manno-octulosonate cytidylyltransferase (Protochlamydia amoebophila (strain UWE25)).